The following is a 160-amino-acid chain: Transcriptional repressor NrdR (160 aa).

Residues 1–11 (MRCPNCNSLDT) are compositionally biased toward polar residues. The tract at residues 1 to 20 (MRCPNCNSLDTQVKDSRPTE) is disordered. Residues 3–34 (CPNCNSLDTQVKDSRPTEDSSVIRRRRVCIAC) fold into a zinc finger. One can recognise an ATP-cone domain in the interval 49–139 (LTVIKRNGRR…VYRNFREAKD (91 aa)).

Belongs to the NrdR family. It depends on Zn(2+) as a cofactor.

In terms of biological role, negatively regulates transcription of bacterial ribonucleotide reductase nrd genes and operons by binding to NrdR-boxes. The sequence is that of Transcriptional repressor NrdR from Rhodopseudomonas palustris (strain HaA2).